The following is a 783-amino-acid chain: Ubiquitin carboxyl-terminal hydrolase 1 (783 aa).

Disordered stretches follow at residues 1 to 22 (MPGV…KKNR) and 34 to 55 (KRAL…YKGS). Positions 7 to 16 (SESNGLSRGS) are enriched in polar residues. Residues Ser-16 and Ser-42 each carry the phosphoserine modification. Over residues 45–55 (NEEKTSEYKGS) the composition is skewed to basic and acidic residues. Ser-67 carries the post-translational modification Phosphoserine. The 703-residue stretch at 81 to 783 (VGLNNLGNTC…TPYLLFYKKL (703 aa)) folds into the USP domain. Cys-90 acts as the Nucleophile in catalysis. The tract at residues 234 to 311 (EEYQKEEMSD…RKAAGDTLEI (78 aa)) is disordered. Basic and acidic residues-rich tracts occupy residues 250–273 (DNMR…KSDA) and 284–296 (ISKE…ENQR). Ser-473 carries the post-translational modification Phosphoserine. The Proton acceptor role is filled by His-591. The tract at residues 685–722 (PDKVASTALPENRNSETNNTNGTDESDSNKESSDQTGI) is disordered. Phosphoserine is present on Ser-766.

The protein belongs to the peptidase C19 family. As to quaternary structure, interacts with FANCD2 and PCNA. Interacts with WDR48. Interacts with ATAD5; the interaction regulates USP1-mediated PCNA deubiquitination. Autocatalytic cleavage of USP1 following UV irradiation inactivates it, leading to an increase in ubiquitinated PCNA, recruitment of POLH and translesion synthesis. In terms of processing, ubiquitinated by the CRL2(KLHDC2) complex following autocatalytic cleavage, leading to its degradation: the CRL2(KLHDC2) complex recognizes the diglycine (Gly-Gly) at the C-terminus.

The protein resides in the nucleus. The enzyme catalyses Thiol-dependent hydrolysis of ester, thioester, amide, peptide and isopeptide bonds formed by the C-terminal Gly of ubiquitin (a 76-residue protein attached to proteins as an intracellular targeting signal).. Negative regulator of DNA damage repair which specifically deubiquitinates monoubiquitinated FANCD2. Also involved in PCNA-mediated translesion synthesis (TLS) by deubiquitinating monoubiquitinated PCNA. Has almost no deubiquitinating activity by itself and requires the interaction with WDR48 to have a high activity. This Bos taurus (Bovine) protein is Ubiquitin carboxyl-terminal hydrolase 1.